Here is a 339-residue protein sequence, read N- to C-terminus: BTB/POZ domain-containing protein KCTD9 (339 aa).

Positions R3–G82 constitute a KHA domain. S11 carries the post-translational modification Phosphoserine. One can recognise a BTB domain in the interval D89 to D161. 3 consecutive Pentapeptide repeat domains span residues A223 to D247, A253 to G292, and A293 to E327.

As to quaternary structure, forms pentamers. Component of a complex mades of five KCTD9 and five CUL3 subunits.

The protein operates within protein modification; protein ubiquitination. Functionally, substrate-specific adapter of a BCR (BTB-CUL3-RBX1) E3 ubiquitin-protein ligase complex, which mediates the ubiquitination of target proteins, leading to their degradation by the proteasome. The sequence is that of BTB/POZ domain-containing protein KCTD9 (Kctd9) from Mus musculus (Mouse).